Reading from the N-terminus, the 95-residue chain is Scorpine-like peptide Smp76 (95 aa).

A signal peptide spans 1–19; that stretch reads MNCKLTALLFLGLIVIASC. One can recognise a BetaSPN-type CS-alpha/beta domain in the interval 55 to 95; sequence EFQCVANVDTLGNCKKHCAKTTGEKGYCHGTKCKCGIELSY. 3 disulfides stabilise this stretch: Cys58/Cys82, Cys68/Cys87, and Cys72/Cys89.

In terms of processing, disulfide bonds are critical for antiviral function, and their disruption inhibit viral activity. Expressed by the venom gland.

The protein resides in the secreted. In terms of biological role, antibacterial peptide. Dose-dependently inhibits Dengue virus (DENV), Zika virus (ZIKV) and Hepatitis C virus (HCV) infections. Two mechanisms of action have been described by two different groups: one involving activity on extracellular particles, and the other regulating the immune system. On Dengue virus (DENV), Zika virus (ZIKV), suppress the established viral infection, similar to the effect of interferon (IFN)-beta. Mechanistically, upregulates the expression of IFN-beta by activating interferon regulatory transcription factor 3 (IRF3) phosphorylation. On HCV and DENV, acts by inactivating extra-cellular infectious particles without affecting viral replication. Shows very weak inhibition on measles virus. Is neither toxic nor hemolytic in vitro at high concentrations. This chain is Scorpine-like peptide Smp76, found in Scorpio palmatus (Israeli golden scorpion).